The following is a 1586-amino-acid chain: COP1-interactive protein 1 (1586 aa).

Residues Leu10 to Ile84 enclose the NAB domain. Residues Val88–Lys119 are disordered. Coiled coils occupy residues Thr128–Ser411, Ala437–Glu1196, Leu1225–Thr1336, and Met1372–Lys1406. LRR repeat units lie at residues Ser173–Leu187, Glu188–Lys210, Asn216–Arg239, Thr261–Ala285, and Glu287–Thr309. Positions Asp249–Ser262 are enriched in basic and acidic residues. The interval Asp249 to Glu286 is disordered. The disordered stretch occupies residues Lys325–Glu353. 20 LRR repeats span residues Ile384–Glu410, Ala437–Ala461, Val473–Asp498, Ile560–Glu586, Val613–Ala637, Leu649–Asp674, Leu768–Ala792, Leu824–Arg850, Val856–Ser880, Glu902–Leu929, Leu944–Ala968, Gln990–Leu1014, Ile1077–Asn1101, Arg1120–Ala1144, Glu1195–Gly1220, Val1247–Asn1272, Met1372–Ile1396, Val1398–Lys1417, Ala1426–Gly1448, and Ile1450–Lys1474. The interval Gln430–Ala456 is disordered. Positions Leu444–Ser455 are enriched in polar residues. The segment at Leu965–Glu985 is disordered. The stretch at Val1496–Glu1530 forms a coiled coil.

Interacts with COP1 coiled-coil region. Mainly expressed in photosynthetic and vascular tissues. Accumulates in both dark-grown and light-grown seedlings roots and shoots, leaves and flowers (at protein level).

The protein resides in the cell membrane. It localises to the cytoplasm. The protein localises to the cytoskeleton. In terms of biological role, positive regulator of abscisic acid (ABA)-mediated signaling pathways involved in abiotic stress responses (e.g. osmotic stress) and leading to various plant adaptation (e.g. stomata closure). This chain is COP1-interactive protein 1, found in Arabidopsis thaliana (Mouse-ear cress).